Consider the following 387-residue polypeptide: WD repeat-containing protein 89 (387 aa).

WD repeat units lie at residues lysine 21–glutamate 65, glycine 68–valine 107, glycine 112–serine 156, threonine 168–alanine 208, asparagine 214–proline 254, and glycine 319–threonine 358.

The sequence is that of WD repeat-containing protein 89 (WDR89) from Pongo abelii (Sumatran orangutan).